The sequence spans 1187 residues: Myelin transcription factor 1-like protein (1187 aa).

Residues Met-1–Pro-20 form a disordered region. The CCHHC-type 1 zinc finger occupies Glu-22–Asp-65. Residues Cys-31, Cys-36, His-49, and Cys-55 each contribute to the Zn(2+) site. 2 disordered regions span residues Pro-56 to Cys-178 and Arg-221 to Ser-248. Acidic residues predominate over residues Glu-89–Glu-172. Ser-251 bears the Phosphoserine mark. Disordered stretches follow at residues Ser-343–Glu-422 and Arg-450–Gly-509. The span at Glu-344–Val-358 shows a compositional bias: polar residues. Composition is skewed to basic and acidic residues over residues Val-362–Tyr-377, Ala-401–Asp-412, and Arg-450–Lys-504. 2 CCHHC-type zinc fingers span residues Ser-496–Ile-539 and Leu-540–Lys-583. Residues Cys-505, Cys-510, His-523, Cys-529, Cys-549, Cys-554, His-567, and Cys-573 each contribute to the Zn(2+) site. Positions Ala-684 to Ser-708 are disordered. 3 CCHHC-type zinc fingers span residues Leu-895–Ile-938, Asp-944–Gly-987, and Lys-997–Ala-1040. Cys-904, Cys-909, His-922, Cys-928, Cys-953, Cys-958, His-971, Cys-977, Cys-1006, Cys-1011, His-1024, and Cys-1030 together coordinate Zn(2+). A coiled-coil region spans residues Ser-1055–His-1131.

The protein belongs to the MYT1 family. Interacts with SIN3B. As to expression, brain, testis and pituitary gland. Expression is higher in the brain than in the testis and pituitary gland. Highest level expression seen in the developing CNS.

The protein localises to the nucleus. It localises to the chromosome. Its function is as follows. Transcription factor that plays a key role in neuronal differentiation. Acts by specifically repressing expression of non-neuronal genes during neuron differentiation. In contrast to other transcription repressors that inhibit specific lineages, mediates repression of multiple differentiation programs. Also represses expression of negative regulators of neurogenesis, such as members of the Notch signaling pathway, including HES1. The combination of three transcription factors, ASCL1, POU3F2/BRN2 and MYT1L, is sufficient to reprogram fibroblasts and other somatic cells into induced neuronal (iN) cells in vitro. Directly binds the 5'-AAGTT-3' core motif present on the promoter of target genes and represses transcription by recruiting a multiprotein complex containing SIN3B. The 5'-AAGTT-3' core motif is absent from the promoter of neural genes. The protein is Myelin transcription factor 1-like protein (Myt1l) of Rattus norvegicus (Rat).